Reading from the N-terminus, the 310-residue chain is MTLALDIPLNDTQFSAQRKSEVLVEALPWIRRFQGRTVVVKYGGNAMVDPGLQQAFADDIVFMASVGIRPIVVHGGGPQINAMLAESATPVEFRNGLRVTSPEVMEVVRMVLVGQVGRQLVNRINAYAPLAAGMSGEDSGLLSARKSRVIVDGEQIDMGLVGDIVDVNIDLVISMLDRGQIPVIAPVSPEVDAAGRPTGQVLNVNADTAATAIAQALRAEKLVMLTNVAGIYGTWPDPHTLISEVSASDLRAMIPRLGEGMRPKAQALLDAIDGGVSSAAIVDGRIEHALLLEIFTTRGVGTMARSDDYV.

Substrate-binding positions include 76 to 77 (GG), arginine 98, and asparagine 203.

This sequence belongs to the acetylglutamate kinase family. ArgB subfamily.

It localises to the cytoplasm. It catalyses the reaction N-acetyl-L-glutamate + ATP = N-acetyl-L-glutamyl 5-phosphate + ADP. It participates in amino-acid biosynthesis; L-arginine biosynthesis; N(2)-acetyl-L-ornithine from L-glutamate: step 2/4. In terms of biological role, catalyzes the ATP-dependent phosphorylation of N-acetyl-L-glutamate. The protein is Acetylglutamate kinase of Cutibacterium acnes (strain DSM 16379 / KPA171202) (Propionibacterium acnes).